The primary structure comprises 201 residues: Recombination protein RecR (201 aa).

A C4-type zinc finger spans residues 60 to 75 (CSCCGNVDTIDPCTVC). One can recognise a Toprim domain in the interval 83–178 (SVIIVVEDVA…KITRLAHGVP (96 aa)).

Belongs to the RecR family.

In terms of biological role, may play a role in DNA repair. It seems to be involved in an RecBC-independent recombinational process of DNA repair. It may act with RecF and RecO. The polypeptide is Recombination protein RecR (Sinorhizobium fredii (strain NBRC 101917 / NGR234)).